Here is a 76-residue protein sequence, read N- to C-terminus: Exodeoxyribonuclease 7 small subunit (76 aa).

This sequence belongs to the XseB family. Heterooligomer composed of large and small subunits.

Its subcellular location is the cytoplasm. The catalysed reaction is Exonucleolytic cleavage in either 5'- to 3'- or 3'- to 5'-direction to yield nucleoside 5'-phosphates.. In terms of biological role, bidirectionally degrades single-stranded DNA into large acid-insoluble oligonucleotides, which are then degraded further into small acid-soluble oligonucleotides. This chain is Exodeoxyribonuclease 7 small subunit, found in Staphylococcus aureus (strain MRSA252).